The following is a 361-amino-acid chain: Ankyrin repeat domain-containing protein 16 (361 aa).

ANK repeat units lie at residues 36 to 66 (AGDT…DIEA), 70 to 99 (DYKR…VVDS), 103 to 132 (ADWT…NPLL), 136 to 165 (DGWN…DAWK), 170 to 200 (IRRT…EPDC), 204 to 233 (CGVT…ACSS), 238 to 268 (MGAQ…DVDV), 273 to 302 (SQLT…DINS), and 306 to 335 (RNRS…KDSE).

In terms of assembly, interacts with AARS; the interaction is direct. As to expression, widely expressed in brain (at protein level).

Its subcellular location is the cytoplasm. The protein localises to the nucleus. Functionally, required to prevent the misactivation of serine (Ser) with tRNA(Ala) by promoting the hydrolysis of Ser-mischarged tRNA(Ala), thereby playing a role in translational fidelity. Binds directly to the catalytic domain of AARS/AlaRS and captures Ser that is misactivated by AARS/AlaRS, preventing the charging of Ser adenylates to tRNA(Ala) and precluding Ser misincorporation in nascent peptides. This Mus musculus (Mouse) protein is Ankyrin repeat domain-containing protein 16.